The chain runs to 937 residues: AP-2 complex subunit beta (937 aa).

Threonine 2 is subject to N-acetylthreonine. The residue at position 4 (serine 4) is a Phosphoserine. Lysine 265 carries the N6-acetyllysine modification. Tyrosine 737 is subject to Phosphotyrosine; by SRC. The segment at 841–937 (WKDIPNENEL…YQVYDSILKN (97 aa)) is interaction with ARRB1. At tyrosine 928 the chain carries Phosphotyrosine.

This sequence belongs to the adaptor complexes large subunit family. In terms of assembly, adaptor protein complex 2 (AP-2) is a heterotetramer composed of two large adaptins (alpha-type subunit AP2A1 or AP2A2 and beta-type subunit AP2B1), a medium adaptin (mu-type subunit AP2M1) and a small adaptin (sigma-type subunit AP2S1). Interacts with EPN1. Interacts with EPS15; clathrin competes with EPS15. Interacts with SNAP91; clathrin competes with SNAP91. Interacts with CLTC; clathrin competes with EPS15, SNAP91 and PIP5K1C. Interacts with LDLRAP1. Interacts with AMPH and BIN1. Interacts with ARF6 (GDP-bound). Interacts (dephosphorylated at Tyr-737) with ARRB1; phosphorylation of AP2B1 at Tyr-737 disrupts the interaction. Interacts with SLC2A8. Interacts with SCYL1 and SCYL2. Interacts with TGFBR1 and TGFBR2. Interacts with PIP5K1C; clathrin competes with PIP5K1C. Interacts with DENND1B, but not with DENND1A, nor DENND1C. Interacts with FCHO1. Interacts with RFTN1. Interacts with KIAA1107. Together with AP2A1 or AP2A2 and AP2M1, it interacts with ADAM10; this interaction facilitates ADAM10 endocytosis from the plasma membrane during long-term potentiation in hippocampal neurons. Phosphorylation at Tyr-737 by SRC occurs at the plasma membrane in clathrin-coated vesicles (CCVs). Expressed in the brain (at protein level).

The protein resides in the cell membrane. The protein localises to the membrane. It localises to the coated pit. Functionally, component of the adaptor protein complex 2 (AP-2). Adaptor protein complexes function in protein transport via transport vesicles in different membrane traffic pathways. Adaptor protein complexes are vesicle coat components and appear to be involved in cargo selection and vesicle formation. AP-2 is involved in clathrin-dependent endocytosis in which cargo proteins are incorporated into vesicles surrounded by clathrin (clathrin-coated vesicles, CCVs) which are destined for fusion with the early endosome. The clathrin lattice serves as a mechanical scaffold but is itself unable to bind directly to membrane components. Clathrin-associated adaptor protein (AP) complexes which can bind directly to both the clathrin lattice and to the lipid and protein components of membranes are considered to be the major clathrin adaptors contributing the CCV formation. AP-2 also serves as a cargo receptor to selectively sort the membrane proteins involved in receptor-mediated endocytosis. AP-2 seems to play a role in the recycling of synaptic vesicle membranes from the presynaptic surface. AP-2 recognizes Y-X-X-[FILMV] (Y-X-X-Phi) and [ED]-X-X-X-L-[LI] endocytosis signal motifs within the cytosolic tails of transmembrane cargo molecules. AP-2 may also play a role in maintaining normal post-endocytic trafficking through the ARF6-regulated, non-clathrin pathway. During long-term potentiation in hippocampal neurons, AP-2 is responsible for the endocytosis of ADAM10. The AP-2 beta subunit acts via its C-terminal appendage domain as a scaffolding platform for endocytic accessory proteins; at least some clathrin-associated sorting proteins (CLASPs) are recognized by their [DE]-X(1,2)-F-X-X-[FL]-X-X-X-R motif. The AP-2 beta subunit binds to clathrin heavy chain, promoting clathrin lattice assembly; clathrin displaces at least some CLASPs from AP2B1 which probably then can be positioned for further coat assembly. The chain is AP-2 complex subunit beta (AP2B1) from Homo sapiens (Human).